The following is a 344-amino-acid chain: Uroporphyrinogen decarboxylase (344 aa).

Residues 26–30, Phe-45, Asp-75, Tyr-151, Ser-206, and His-320 each bind substrate; that span reads RQAGR.

It belongs to the uroporphyrinogen decarboxylase family. As to quaternary structure, homodimer.

The protein resides in the cytoplasm. The enzyme catalyses uroporphyrinogen III + 4 H(+) = coproporphyrinogen III + 4 CO2. It functions in the pathway porphyrin-containing compound metabolism; protoporphyrin-IX biosynthesis; coproporphyrinogen-III from 5-aminolevulinate: step 4/4. In terms of biological role, catalyzes the decarboxylation of four acetate groups of uroporphyrinogen-III to yield coproporphyrinogen-III. The chain is Uroporphyrinogen decarboxylase from Staphylococcus epidermidis (strain ATCC 35984 / DSM 28319 / BCRC 17069 / CCUG 31568 / BM 3577 / RP62A).